A 397-amino-acid chain; its full sequence is Major outer membrane porin, serovar H (397 aa).

The N-terminal stretch at 1–22 is a signal peptide; the sequence is MKKLLKSVLVFAALSSASSLQA.

Belongs to the chlamydial porin (CP) (TC 1.B.2) family. As to quaternary structure, part of a disulfide cross-linked outer membrane complex (COMC) composed of the major outer membrane porin (MOMP), the small cysteine-rich protein (OmcA) and the large cysteine-rich periplasmic protein (OmcB).

It is found in the cell outer membrane. Its function is as follows. In elementary bodies (EBs, the infectious stage, which is able to survive outside the host cell) provides the structural integrity of the outer envelope through disulfide cross-links with the small cysteine-rich protein and the large cysteine-rich periplasmic protein. It has been described in publications as the Sarkosyl-insoluble COMC (Chlamydia outer membrane complex), and serves as the functional equivalent of peptidoglycan. Permits diffusion of specific solutes through the outer membrane. The chain is Major outer membrane porin, serovar H (ompA) from Chlamydia trachomatis.